The sequence spans 267 residues: Hydroxynaphthalene reductase-like protein Arp2 (267 aa).

NADP(+) contacts are provided by Ile25, Asn45, Asp71, and Asn98. Catalysis depends on proton donor residues Ser147 and Ser148. NADP(+)-binding residues include Tyr162, Lys166, Val195, and Thr197. Tyr162 serves as the catalytic Proton acceptor. Lys166 serves as the catalytic Lowers pKa of active site Tyr.

This sequence belongs to the short-chain dehydrogenases/reductases (SDR) family.

Its function is as follows. Hydroxynaphthalene reductase-like protein; part of the Pks2 gene cluster that mediates the formation of infectious structures (appressoria), enabling these fungi to kill insects faster. The product of the Pks2 gene cluster is different from the one of Pks1 and has still not been identified. In Metarhizium majus (strain ARSEF 297), this protein is Hydroxynaphthalene reductase-like protein Arp2.